Reading from the N-terminus, the 1770-residue chain is Transposon Ty2-OR2 Gag-Pol polyprotein (1770 aa).

Disordered stretches follow at residues 1–88 (MESQ…YQQH) and 359–449 (QHSE…SNDE). Polar residues-rich tracts occupy residues 19–39 (ASVT…SASN) and 49–60 (KVNSQEETTPGT). The RNA-binding stretch occupies residues 295 to 397 (ENNINVSDRL…SSKPRAAKAH (103 aa)). A compositionally biased stretch (low complexity) spans 369-381 (TSPNTTNTKVTTR). Composition is skewed to polar residues over residues 399 to 408 (IATSSKFSRV) and 415 to 435 (ESTV…GQQQ). The For protease activity; shared with dimeric partner role is filled by Asp457. The interval 579-636 (NVNKSKSVNKYPYPLIHRMLGHANFRSIQKSLKKNAVTYLKESDIEWSNASTYQCPDC) is integrase-type zinc finger-like. An Integrase catalytic domain is found at 656–831 (ESYEPFQYLH…AGLDITTILP (176 aa)). Residues Asp667 and Asp732 each contribute to the Mg(2+) site. Disordered stretches follow at residues 1005–1038 (GGTI…MIDL), 1057–1135 (GGTE…KSSK), 1146–1165 (LPLP…VSKD), and 1170–1205 (HSRQ…TEIE). Composition is skewed to polar residues over residues 1009 to 1024 (ESDT…FTAR) and 1065 to 1082 (QRNS…STPS). The segment covering 1151–1165 (LTHKSPTDTSDVSKD) has biased composition (basic and acidic residues). The Bipartite nuclear localization signal signature appears at 1193-1227 (KKRSLEDNETEIEVSRDTWNNKNMRSLEPPRSKKR). Residues 1353–1491 (NDYYITQLDI…DILGLEIKYQ (139 aa)) form the Reverse transcriptase Ty1/copia-type domain. Mg(2+) is bound by residues Asp1361, Asp1442, Asp1443, Asp1625, Glu1667, and Asp1700. One can recognise an RNase H Ty1/copia-type domain in the interval 1625–1767 (DASYGNQPYY…IKTFKLLTNK (143 aa)).

In terms of assembly, the capsid protein forms a homotrimer, from which the VLPs are assembled. The protease is a homodimer, whose active site consists of two apposed aspartic acid residues. Initially, virus-like particles (VLPs) are composed of the structural unprocessed proteins Gag and Gag-Pol, and also contain the host initiator methionine tRNA (tRNA(i)-Met) which serves as a primer for minus-strand DNA synthesis, and a dimer of genomic Ty RNA. Processing of the polyproteins occurs within the particle and proceeds by an ordered pathway, called maturation. First, the protease (PR) is released by autocatalytic cleavage of the Gag-Pol polyprotein, and this cleavage is a prerequisite for subsequent processing at the remaining sites to release the mature structural and catalytic proteins. Maturation takes place prior to the RT reaction and is required to produce transposition-competent VLPs.

The protein resides in the cytoplasm. It is found in the nucleus. It carries out the reaction DNA(n) + a 2'-deoxyribonucleoside 5'-triphosphate = DNA(n+1) + diphosphate. The catalysed reaction is Endonucleolytic cleavage to 5'-phosphomonoester.. Capsid protein (CA) is the structural component of the virus-like particle (VLP), forming the shell that encapsulates the retrotransposons dimeric RNA genome. The particles are assembled from trimer-clustered units and there are holes in the capsid shells that allow for the diffusion of macromolecules. CA also has nucleocapsid-like chaperone activity, promoting primer tRNA(i)-Met annealing to the multipartite primer-binding site (PBS), dimerization of Ty2 RNA and initiation of reverse transcription. Functionally, the aspartyl protease (PR) mediates the proteolytic cleavages of the Gag and Gag-Pol polyproteins after assembly of the VLP. In terms of biological role, reverse transcriptase/ribonuclease H (RT) is a multifunctional enzyme that catalyzes the conversion of the retro-elements RNA genome into dsDNA within the VLP. The enzyme displays a DNA polymerase activity that can copy either DNA or RNA templates, and a ribonuclease H (RNase H) activity that cleaves the RNA strand of RNA-DNA heteroduplexes during plus-strand synthesis and hydrolyzes RNA primers. The conversion leads to a linear dsDNA copy of the retrotransposon that includes long terminal repeats (LTRs) at both ends. Its function is as follows. Integrase (IN) targets the VLP to the nucleus, where a subparticle preintegration complex (PIC) containing at least integrase and the newly synthesized dsDNA copy of the retrotransposon must transit the nuclear membrane. Once in the nucleus, integrase performs the integration of the dsDNA into the host genome. In Saccharomyces cerevisiae (strain ATCC 204508 / S288c) (Baker's yeast), this protein is Transposon Ty2-OR2 Gag-Pol polyprotein (TY2B-OR2).